A 113-amino-acid chain; its full sequence is MYYKFSSFTQKLAGAWASEAYTPQGLKPVSTEAPPIIFATPTKLTSSVTAYDYSGKNKVPELQKFFQKADGVPIHLKRGLPDQMLYRTTMALTLGGTIYCLIALYMASQPRNK.

Residues 1–54 (MYYKFSSFTQKLAGAWASEAYTPQGLKPVSTEAPPIIFATPTKLTSSVTAYDYS) constitute a mitochondrion transit peptide. Lys-68 is modified (N6-acetyllysine). A helical transmembrane segment spans residues 81-106 (PDQMLYRTTMALTLGGTIYCLIALYM).

This sequence belongs to the cytochrome c oxidase VIIa family. Interacts with the mitochondrial respiratory complexes III (CIII) and IV (CIV), promoting their association.

Its subcellular location is the mitochondrion inner membrane. It participates in energy metabolism; oxidative phosphorylation. Assembly factor that mediates the formation of some mitochondrial respiratory supercomplexes (respirasomes), thereby promoting oxidative phosphorylation and energy metabolism. Acts as a molecular adapter that associates with both mitochondrial respiratory complexes III (CIII) and IV (CIV), promoting their association. Mediates the formation of various mitochondrial respiratory supercomplexes, such as MCIII(2)IV(2), composed of two CIII and two CIV, and the CS-respirasome (MCI(1)III(2)IV(2)), composed of one CI, two CIII and two CIV. Not involved in the formation of the canonical respirasome (MCI(1)III(2)IV(1)), composed of one CI, two CIII and one CIV. The formation of different respirasomes is important for cell adaptation to oxygen conditions and prevent metabolic exhaustion: supercomplexes mediated by COX7A2L/SCAF1 are required to maintain oxidative phosphorylation upon low oxygen conditions and promote metabolic rewiring toward glycolysis. This is Cytochrome c oxidase subunit 7A2-like, mitochondrial from Mus musculus (Mouse).